A 185-amino-acid polypeptide reads, in one-letter code: Elongation factor P (185 aa).

It belongs to the elongation factor P family.

It is found in the cytoplasm. It participates in protein biosynthesis; polypeptide chain elongation. Its function is as follows. Involved in peptide bond synthesis. Stimulates efficient translation and peptide-bond synthesis on native or reconstituted 70S ribosomes in vitro. Probably functions indirectly by altering the affinity of the ribosome for aminoacyl-tRNA, thus increasing their reactivity as acceptors for peptidyl transferase. In Thermoanaerobacter sp. (strain X514), this protein is Elongation factor P.